Here is a 498-residue protein sequence, read N- to C-terminus: ATP synthase subunit beta, chloroplastic (498 aa).

172–179 (GGAGVGKT) serves as a coordination point for ATP.

The protein belongs to the ATPase alpha/beta chains family. F-type ATPases have 2 components, CF(1) - the catalytic core - and CF(0) - the membrane proton channel. CF(1) has five subunits: alpha(3), beta(3), gamma(1), delta(1), epsilon(1). CF(0) has four main subunits: a(1), b(1), b'(1) and c(9-12).

The protein localises to the plastid. It is found in the chloroplast thylakoid membrane. It carries out the reaction ATP + H2O + 4 H(+)(in) = ADP + phosphate + 5 H(+)(out). Its function is as follows. Produces ATP from ADP in the presence of a proton gradient across the membrane. The catalytic sites are hosted primarily by the beta subunits. This chain is ATP synthase subunit beta, chloroplastic, found in Licuala grandis (Ruffled fan palm).